The chain runs to 492 residues: Spindle assembly abnormal protein 6 (492 aa).

Positions 46-98 constitute a PISA domain; it reads SGEKELKFEISRSDDFEFLFSETLNNEKYQILARDHDLTVDFDAFPKVIIQHL. Residues 192–407 are a coiled coil; it reads KSADELASLR…KIAHYRAQRF (216 aa).

As to quaternary structure, nine homodimers form a cartwheel structure with an internal diameter of 23 nM and radial spokes connecting to the microtubule triplets. Interacts with sas-5.

The protein localises to the cytoplasm. Its subcellular location is the cytoskeleton. It localises to the microtubule organizing center. It is found in the centrosome. The protein resides in the centriole. Functionally, central scaffolding component of the centrioles ensuring their 9-fold symmetry. Required for centrosome biogenesis and duplication. This chain is Spindle assembly abnormal protein 6, found in Caenorhabditis elegans.